A 466-amino-acid chain; its full sequence is Cocosin 1 (466 aa).

The signal sequence occupies residues 1 to 22 (MGSSSLLSFSLCLLLLCHLSQA). Cystine bridges form between Cys-45/Cys-78 and Cys-121/Cys-288. 2 consecutive Cupin type-1 domains span residues 50–242 (LNAL…ELAR) and 294–443 (QNIG…DEAR).

This sequence belongs to the 11S seed storage protein (globulins) family. Hexamer; each subunit is composed of an acidic and a basic chain derived from a single precursor and linked by a disulfide bond. In terms of tissue distribution, endosperm of the seeds.

Functionally, seed storage protein. In Cocos nucifera (Coconut palm), this protein is Cocosin 1.